We begin with the raw amino-acid sequence, 900 residues long: Isoleucine--tRNA ligase (900 aa).

Residues 58–68 (PYANGDLHTGH) carry the 'HIGH' region motif. Position 550 (E550) interacts with L-isoleucyl-5'-AMP. A 'KMSKS' region motif is present at residues 591-595 (KMSKS). K594 contributes to the ATP binding site. Zn(2+) contacts are provided by C871, C874, C888, and C891.

Belongs to the class-I aminoacyl-tRNA synthetase family. IleS type 1 subfamily. As to quaternary structure, monomer. It depends on Zn(2+) as a cofactor.

It localises to the cytoplasm. It catalyses the reaction tRNA(Ile) + L-isoleucine + ATP = L-isoleucyl-tRNA(Ile) + AMP + diphosphate. Catalyzes the attachment of isoleucine to tRNA(Ile). As IleRS can inadvertently accommodate and process structurally similar amino acids such as valine, to avoid such errors it has two additional distinct tRNA(Ile)-dependent editing activities. One activity is designated as 'pretransfer' editing and involves the hydrolysis of activated Val-AMP. The other activity is designated 'posttransfer' editing and involves deacylation of mischarged Val-tRNA(Ile). The polypeptide is Isoleucine--tRNA ligase (Malacoplasma penetrans (strain HF-2) (Mycoplasma penetrans)).